We begin with the raw amino-acid sequence, 126 residues long: Protein Wnt-7(II) (126 aa).

Serine 1 carries the O-palmitoleoyl serine; by PORCN lipid modification. A disulfide bridge links cysteine 92 with cysteine 107. Residue asparagine 93 is glycosylated (N-linked (GlcNAc...) asparagine).

Belongs to the Wnt family. Palmitoleoylation is required for efficient binding to frizzled receptors. Depalmitoleoylation leads to Wnt signaling pathway inhibition.

The protein resides in the secreted. The protein localises to the extracellular space. Its subcellular location is the extracellular matrix. Functionally, ligand for members of the frizzled family of seven transmembrane receptors. Probable developmental protein. May be a signaling molecule which affects the development of discrete regions of tissues. Is likely to signal over only few cell diameters. This Eptatretus stoutii (Pacific hagfish) protein is Protein Wnt-7(II) (WNT-7(II)).